We begin with the raw amino-acid sequence, 1017 residues long: Type VI secretion system spike protein VgrG3 (1017 aa).

The active site involves Asp842.

Belongs to the VgrG protein family. As to quaternary structure, interacts with TsiV3. Interacts with TseL.

It is found in the secreted. Functionally, part of the type VI secretion system specialized secretion system, which delivers several virulence factors in both prokaryotic and eukaryotic cells during infection. Forms the spike at the tip of the elongating tube formed by haemolysin co-regulated protein Hcp. Allows the delivery of the TseL antibacterial toxin to target cells where it exerts its toxicity. Additionally, acts directly as an effector and targets the cell wall peptidoglycan layer of prey cells for degradation via its C-terminus. Toxicity is counteracted by a cognate immunity protein TsiV3. The protein is Type VI secretion system spike protein VgrG3 of Vibrio cholerae serotype O1 (strain ATCC 39315 / El Tor Inaba N16961).